We begin with the raw amino-acid sequence, 188 residues long: Phosphoheptose isomerase (188 aa).

The region spanning 33-188 is the SIS domain; sequence VTASLRAGGK…CGLVEDALCS (156 aa). A substrate-binding site is contributed by 48–50; sequence NGG. Positions 57 and 61 each coordinate Zn(2+). Substrate contacts are provided by residues Glu-61, 90–91, 116–118, Ser-121, and Gln-168; these read ND and STS. 2 residues coordinate Zn(2+): Gln-168 and His-176.

The protein belongs to the SIS family. GmhA subfamily. Homotetramer. Requires Zn(2+) as cofactor.

The protein localises to the cytoplasm. It carries out the reaction 2 D-sedoheptulose 7-phosphate = D-glycero-alpha-D-manno-heptose 7-phosphate + D-glycero-beta-D-manno-heptose 7-phosphate. It functions in the pathway carbohydrate biosynthesis; D-glycero-D-manno-heptose 7-phosphate biosynthesis; D-glycero-alpha-D-manno-heptose 7-phosphate and D-glycero-beta-D-manno-heptose 7-phosphate from sedoheptulose 7-phosphate: step 1/1. Its function is as follows. Catalyzes the isomerization of sedoheptulose 7-phosphate in D-glycero-D-manno-heptose 7-phosphate. The polypeptide is Phosphoheptose isomerase (Rhodospirillum rubrum (strain ATCC 11170 / ATH 1.1.1 / DSM 467 / LMG 4362 / NCIMB 8255 / S1)).